The primary structure comprises 122 residues: Large ribosomal subunit protein uL14 (122 aa).

Belongs to the universal ribosomal protein uL14 family. In terms of assembly, part of the 50S ribosomal subunit. Forms a cluster with proteins L3 and L19. In the 70S ribosome, L14 and L19 interact and together make contacts with the 16S rRNA in bridges B5 and B8.

Functionally, binds to 23S rRNA. Forms part of two intersubunit bridges in the 70S ribosome. The sequence is that of Large ribosomal subunit protein uL14 from Desulfovibrio desulfuricans (strain ATCC 27774 / DSM 6949 / MB).